Reading from the N-terminus, the 150-residue chain is Large ribosomal subunit protein bL9 (150 aa).

The protein belongs to the bacterial ribosomal protein bL9 family.

In terms of biological role, binds to the 23S rRNA. This Shewanella pealeana (strain ATCC 700345 / ANG-SQ1) protein is Large ribosomal subunit protein bL9.